Here is a 194-residue protein sequence, read N- to C-terminus: Lymphocyte antigen 6 complex locus protein G5b (194 aa).

An N-terminal signal peptide occupies residues 1-18 (MRARVLVGMLTMVGFAMG). The UPAR/Ly6 domain occupies 26–118 (RTCHLCLLED…SAQHQSTLRG (93 aa)). Cystine bridges form between cysteine 28/cysteine 55, cysteine 31/cysteine 40, cysteine 47/cysteine 73, cysteine 81/cysteine 98, and cysteine 99/cysteine 104. An N-linked (GlcNAc...) asparagine glycan is attached at asparagine 63. N-linked (GlcNAc...) asparagine glycosylation is present at asparagine 141.

In terms of assembly, monomer. N-glycosylated.

Its subcellular location is the secreted. This chain is Lymphocyte antigen 6 complex locus protein G5b (Ly6g5b), found in Mus musculus (Mouse).